The sequence spans 131 residues: D-ribose pyranase (131 aa).

The active-site Proton donor is H20. Substrate-binding positions include D28, H98, and 120 to 122 (YSN).

This sequence belongs to the RbsD / FucU family. RbsD subfamily. Homodecamer.

Its subcellular location is the cytoplasm. The catalysed reaction is beta-D-ribopyranose = beta-D-ribofuranose. It functions in the pathway carbohydrate metabolism; D-ribose degradation; D-ribose 5-phosphate from beta-D-ribopyranose: step 1/2. Functionally, catalyzes the interconversion of beta-pyran and beta-furan forms of D-ribose. This Lactobacillus gasseri (strain ATCC 33323 / DSM 20243 / BCRC 14619 / CIP 102991 / JCM 1131 / KCTC 3163 / NCIMB 11718 / NCTC 13722 / AM63) protein is D-ribose pyranase.